The chain runs to 80 residues: Exodeoxyribonuclease 7 small subunit (80 aa).

The protein belongs to the XseB family. As to quaternary structure, heterooligomer composed of large and small subunits.

The protein localises to the cytoplasm. The catalysed reaction is Exonucleolytic cleavage in either 5'- to 3'- or 3'- to 5'-direction to yield nucleoside 5'-phosphates.. In terms of biological role, bidirectionally degrades single-stranded DNA into large acid-insoluble oligonucleotides, which are then degraded further into small acid-soluble oligonucleotides. The sequence is that of Exodeoxyribonuclease 7 small subunit from Vibrio campbellii (strain ATCC BAA-1116).